Here is a 2442-residue protein sequence, read N- to C-terminus: Piezo-type mechanosensitive ion channel component 1 (2442 aa).

Over 1 to 5 the chain is Extracellular; that stretch reads MTVPP. Residues 6 to 26 form a helical membrane-spanning segment; that stretch reads LLKSCVVKLLLPAALLAAAII. Position 27 (Arg-27) is a topological domain, cytoplasmic. Residues 28-48 traverse the membrane as a helical segment; sequence PSFLSIGYVLLALVSAVLPPI. Over 49-56 the chain is Extracellular; the sequence is RKSLALPK. A helical transmembrane segment spans residues 57–77; the sequence is LVGTFVIITFLFCLAVALGVG. Residues 78–122 lie on the Cytoplasmic side of the membrane; sequence SYQISEQVVHKNDRTYICNRSDTTLFRSIGLVRFHPTGTFESTRA. The helical transmembrane segment at 123 to 143 threads the bilayer; it reads FLPEIIATSAALLTIIIVMFL. Residues 144–173 lie on the Extracellular side of the membrane; the sequence is SHRDEQLDVVGDVVTVRSESGREQRRQRKL. Residues 174–196 traverse the membrane as a helical segment; that stretch reads AAIMWSAIGNSLRRLTNFVLFLF. Residues 197-198 lie on the Cytoplasmic side of the membrane; the sequence is TA. A helical membrane pass occupies residues 199–219; that stretch reads YVGIVKPSLSNSIYFLAFLFI. At 220–239 the chain is on the extracellular side; that stretch reads STWWSTYTPLRHGVYNQIKK. The helical transmembrane segment at 240–260 threads the bilayer; that stretch reads FLIFYSALHFLVLYTYQIPIV. Topologically, residues 261-303 are cytoplasmic; sequence HHSWLPTGSFLPRLFGLTVLMDSSCPEWWKFPFVAPDFNDDDL. A helical membrane pass occupies residues 304-324; the sequence is IMKWPLYANPIVVLVFFYLTV. Residues 325–454 lie on the Extracellular side of the membrane; that stretch reads AQYKFTRNGS…GDKESAASKG (130 aa). Residues Asn-332, Asn-392, and Asn-440 are each glycosylated (N-linked (GlcNAc...) asparagine). Residues 389 to 417 are disordered; the sequence is LLSNASSSANDDEQGRARSRSPLRNGEEQ. The chain crosses the membrane as a helical span at residues 455-475; sequence MIAVMTFVIFHSYSIALTAMM. The Cytoplasmic segment spans residues 476–478; that stretch reads TWA. The chain crosses the membrane as a helical span at residues 479-499; it reads LLYHSIFGLILLILTCILWIF. The Extracellular portion of the chain corresponds to 500 to 506; that stretch reads RDTRKSS. The helical transmembrane segment at 507–527 threads the bilayer; it reads FAMAPIILMYIEFLLILQYFL. Over 528 to 552 the chain is Cytoplasmic; sequence SMDIHAEIGDPAWMNFVGIEWTTLP. Residues 553–573 form a helical membrane-spanning segment; sequence VHAVIILCVQTLLTLPVFLLL. Over 574-633 the chain is Extracellular; that stretch reads RLARREKFYESLSDYERQRRINSYGTFGASKTGAGGVAVAKFQDPKSRKFAAFVEYLSNK. Residues 634–654 form a helical membrane-spanning segment; that stretch reads VSVYFIFVVSVVLLVVSTCFA. Topologically, residues 655 to 656 are cytoplasmic; sequence PN. Residues 657 to 677 traverse the membrane as a helical segment; it reads FYNILFFALWALNLIYLKFSF. Over 678 to 683 the chain is Extracellular; the sequence is RLYRGL. The helical transmembrane segment at 684-704 threads the bilayer; the sequence is AYAFWLTLTFYTSIVIIALYI. Residues 705-739 are Cytoplasmic-facing; the sequence is YQFPGVSQWIIRNTSLSQEWLNAIGLVDFRAIGES. The helical transmembrane segment at 740-760 threads the bilayer; the sequence is GALFLQLLAPIALFVVTMLQL. The Extracellular segment spans residues 761–832; it reads KFFHGPWSRA…WRFFEVHISK (72 aa). The tract at residues 768–798 is disordered; the sequence is SRATSPRRAENDPPTSTTEAAAVASTSGTQG. Residues 782–794 show a composition bias toward low complexity; sequence TSTTEAAAVASTS. N-linked (GlcNAc...) asparagine glycosylation is present at Asn-816. A helical membrane pass occupies residues 833 to 853; sequence IVFVIIAIFIANNINALYIPL. Topologically, residues 854–874 are cytoplasmic; it reads VILLSLAICLPSAADGIFSLF. Residues 875 to 895 traverse the membrane as a helical segment; the sequence is MCAYLFLVALSKMIYQLDIVP. Topologically, residues 896 to 931 are extracellular; sequence ELSQIDRGVGADNCSHGNISMPEWFGLKKEVEGTEP. Asn-908 and Asn-913 each carry an N-linked (GlcNAc...) asparagine glycan. A helical transmembrane segment spans residues 932 to 952; that stretch reads IYMLFGVIVSIIALAFQSIVI. Residues 953–990 lie on the Cytoplasmic side of the membrane; that stretch reads YRQRHYRASLGLPESMRAKVFPDFHHSHFDRSLKNAIQ. The helical transmembrane segment at 991–1011 threads the bilayer; it reads FLIDYGFYKFGLEITMIAIGI. Position 1012 (Asp-1012) is a topological domain, extracellular. Residues 1013-1033 form a helical membrane-spanning segment; sequence IFNRMDALAAIQCFWLVLFAL. Residues 1034–1041 lie on the Cytoplasmic side of the membrane; it reads NKRVFVRR. Residues 1042–1062 traverse the membrane as a helical segment; that stretch reads IWVFYVIYMAILYPLQFFSYV. Topologically, residues 1063–1096 are extracellular; it reads GLPPDSCIEYPWSYWIPSYSDDARFNLSYLLNLS. N-linked (GlcNAc...) asparagine glycans are attached at residues Asn-1088 and Asn-1094. Residues 1097-1117 traverse the membrane as a helical segment; the sequence is IYGVNWPSAYLIGDFFVLLLA. The Cytoplasmic segment spans residues 1118–1160; that stretch reads SCQLAVFRREGEDNDSIYNDGNFVIKPENPQYDFIDTKKSYVD. Residues 1161-1181 traverse the membrane as a helical segment; that stretch reads YFKSFVFHYGHWITLMSTLAA. The Extracellular segment spans residues 1182 to 1187; the sequence is GIAGTS. Residues 1188–1210 traverse the membrane as a helical segment; sequence LFALGYIIFTLTMLWSGNNLYVM. Residues 1211–1231 are Cytoplasmic-facing; it reads NSTLRSFEHTLKRWNALLGYT. A helical membrane pass occupies residues 1232–1252; that stretch reads LFTITMKVCLQIFGCVFLSWF. Over 1253-1299 the chain is Extracellular; the sequence is DQSGGWGKTLCIVRQLFSITCVNNECHVLKELEDFSKACAVETKEGN. The helical transmembrane segment at 1300–1320 threads the bilayer; sequence IGFDVIALSFLVFQIRIFHSW. The Cytoplasmic portion of the chain corresponds to 1321–1615; sequence YFQHCMVEYR…VVNCIGAHTD (295 aa). The tract at residues 1463 to 1502 is disordered; it reads DTIKDPDSRALIAVSEPEARKPGGTEETDGDEDEDNKDSK. Over residues 1488 to 1498 the composition is skewed to acidic residues; it reads EETDGDEDEDN. A helical membrane pass occupies residues 1616-1636; sequence ILCYFFAIMTQVMTGGLITLP. Topologically, residues 1637 to 1654 are extracellular; sequence LPLMSLFWGNLSNPRPSK. A glycan (N-linked (GlcNAc...) asparagine) is linked at Asn-1646. Residues 1655-1675 traverse the membrane as a helical segment; sequence FFWVTMITYTECVIVIKFVCQ. At 1676 to 1706 the chain is on the cytoplasmic side; it reads FAFMPYNSITWRTEHQMDPMSLDKLFGVSQR. Residues 1707–1727 traverse the membrane as a helical segment; sequence DSFALWDIVLLFSLFFHRYML. At 1728–1833 the chain is on the extracellular side; sequence RKLGLWKDAN…KFRYIRDLYP (106 aa). N-linked (GlcNAc...) asparagine glycosylation is present at Asn-1737. Residues 1834-1854 traverse the membrane as a helical segment; it reads IMFGIDVICFLIMTFGYSAFG. Residues 1855–1866 are Cytoplasmic-facing; that stretch reads EGGSGNVLDDVK. A helical membrane pass occupies residues 1867–1887; it reads ASRIPVTLVVMLVGMTLAIII. Topologically, residues 1888 to 1900 are extracellular; sequence DRALYLRKSVVGK. Residues 1901–1921 form a helical membrane-spanning segment; sequence LIYQVLMIAFLHIWVFLVLPN. Residues 1922 to 1930 are Cytoplasmic-facing; that stretch reads MTRRSAISN. A helical membrane pass occupies residues 1931–1951; it reads HVAQALYVIKSCYFLVSAWQI. Residues 1952-2046 lie on the Extracellular side of the membrane; sequence RNGYPELCIG…KGKLVKYMMG (95 aa). The helical transmembrane segment at 2047–2067 threads the bilayer; the sequence is FPIIIGVVIFIFSPLLLWSLL. Over 2068-2346 the chain is Cytoplasmic; that stretch reads NQIGTISMPE…VGFIDRAFPS (279 aa). A helical transmembrane segment spans residues 2347-2367; sequence FLAKVFKGGVIAVYLSVILVV. Over 2368 to 2442 the chain is Extracellular; sequence GRGLVRGIFT…WTRMSKKKQE (75 aa).

This sequence belongs to the PIEZO (TC 1.A.75) family. Expressed in the pharyngeal-intestinal and spermathecal-uterine valves and in multiple reproductive tissues including the germline, somatic oviduct, and spermatheca. During reproduction, it is expressed in sheath cells, sperm, both spermathecal valves and the spermathecal bag cells.

It is found in the cell membrane. Functionally, pore-forming subunit of a mechanosensitive non-specific cation channel. Generates currents characterized by a linear current-voltage relationship. Plays a role in reproduction by positively regulating inter-tissue signaling to promote oocyte maturation, ovulation and fertilization, and sperm navigation from and to the spermatheca. May play a role in regulating cytosolic and endoplasmic reticulum calcium ion release. The protein is Piezo-type mechanosensitive ion channel component 1 of Caenorhabditis elegans.